The primary structure comprises 387 residues: Succinate--CoA ligase [ADP-forming] subunit beta (387 aa).

The 228-residue stretch at 9–236 folds into the ATP-grasp domain; that stretch reads KELFAKHNVP…RDATDPLELK (228 aa). Residues lysine 45, 52–54, serine 94, and glutamate 99 each bind ATP; that span reads GRG. Asparagine 191 and aspartate 205 together coordinate Mg(2+). Residues asparagine 256 and 318–320 each bind substrate; that span reads GIT.

This sequence belongs to the succinate/malate CoA ligase beta subunit family. Heterotetramer of two alpha and two beta subunits. Mg(2+) serves as cofactor.

The enzyme catalyses succinate + ATP + CoA = succinyl-CoA + ADP + phosphate. It carries out the reaction GTP + succinate + CoA = succinyl-CoA + GDP + phosphate. The protein operates within carbohydrate metabolism; tricarboxylic acid cycle; succinate from succinyl-CoA (ligase route): step 1/1. Succinyl-CoA synthetase functions in the citric acid cycle (TCA), coupling the hydrolysis of succinyl-CoA to the synthesis of either ATP or GTP and thus represents the only step of substrate-level phosphorylation in the TCA. The beta subunit provides nucleotide specificity of the enzyme and binds the substrate succinate, while the binding sites for coenzyme A and phosphate are found in the alpha subunit. This chain is Succinate--CoA ligase [ADP-forming] subunit beta, found in Mycolicibacterium smegmatis (strain ATCC 700084 / mc(2)155) (Mycobacterium smegmatis).